Consider the following 331-residue polypeptide: D-galactose/methyl-galactoside binding periplasmic protein MglB (331 aa).

The first 24 residues, 1–24, serve as a signal peptide directing secretion; it reads MKKTAVLSTVAFAIALGSASASFA. 2 residues coordinate beta-D-galactose: Asp-38 and Asn-115. The beta-D-glucose site is built by Asp-38 and Asn-115. Ca(2+)-binding residues include Asp-158, Asn-160, Asp-162, Lys-164, and Gln-166. The beta-D-galactose site is built by His-176, Asp-178, and Arg-182. Positions 176, 178, and 182 each coordinate beta-D-glucose. A Ca(2+)-binding site is contributed by Glu-229. 3 residues coordinate beta-D-galactose: Asn-235, Asp-259, and Asn-279. Positions 235, 259, and 279 each coordinate beta-D-glucose.

This sequence belongs to the bacterial solute-binding protein 2 family. In terms of assembly, the ABC transporter complex is composed of one ATP-binding protein (MglA), two transmembrane proteins (MglC) and a solute-binding protein (MglB).

The protein localises to the periplasm. In terms of biological role, part of the ABC transporter complex MglABC involved in galactose/methyl galactoside import. The polypeptide is D-galactose/methyl-galactoside binding periplasmic protein MglB (mglB) (Haemophilus influenzae (strain ATCC 51907 / DSM 11121 / KW20 / Rd)).